Consider the following 1406-residue polypeptide: DNA-directed RNA polymerase subunit beta' (1406 aa).

4 residues coordinate Zn(2+): Cys-70, Cys-72, Cys-85, and Cys-88. Positions 460, 462, and 464 each coordinate Mg(2+). 4 residues coordinate Zn(2+): Cys-814, Cys-888, Cys-895, and Cys-898.

It belongs to the RNA polymerase beta' chain family. In terms of assembly, the RNAP catalytic core consists of 2 alpha, 1 beta, 1 beta' and 1 omega subunit. When a sigma factor is associated with the core the holoenzyme is formed, which can initiate transcription. The cofactor is Mg(2+). Zn(2+) is required as a cofactor.

It catalyses the reaction RNA(n) + a ribonucleoside 5'-triphosphate = RNA(n+1) + diphosphate. Functionally, DNA-dependent RNA polymerase catalyzes the transcription of DNA into RNA using the four ribonucleoside triphosphates as substrates. The chain is DNA-directed RNA polymerase subunit beta' from Colwellia psychrerythraea (strain 34H / ATCC BAA-681) (Vibrio psychroerythus).